The sequence spans 54 residues: ATP synthase protein 8 (54 aa).

Residues 13-32 (ITFTFVIITLMVYILSKYIL) traverse the membrane as a helical segment.

It belongs to the ATPase protein 8 family. In terms of assembly, F-type ATPases have 2 components, CF(1) - the catalytic core - and CF(0) - the membrane proton channel.

It localises to the mitochondrion membrane. Functionally, mitochondrial membrane ATP synthase (F(1)F(0) ATP synthase or Complex V) produces ATP from ADP in the presence of a proton gradient across the membrane which is generated by electron transport complexes of the respiratory chain. F-type ATPases consist of two structural domains, F(1) - containing the extramembraneous catalytic core and F(0) - containing the membrane proton channel, linked together by a central stalk and a peripheral stalk. During catalysis, ATP synthesis in the catalytic domain of F(1) is coupled via a rotary mechanism of the central stalk subunits to proton translocation. Part of the complex F(0) domain. Minor subunit located with subunit a in the membrane. The sequence is that of ATP synthase protein 8 (atp-8) from Neurospora crassa (strain ATCC 24698 / 74-OR23-1A / CBS 708.71 / DSM 1257 / FGSC 987).